Reading from the N-terminus, the 238-residue chain is Phosphoribosylaminoimidazole-succinocarboxamide synthase (238 aa).

The protein belongs to the SAICAR synthetase family.

It catalyses the reaction 5-amino-1-(5-phospho-D-ribosyl)imidazole-4-carboxylate + L-aspartate + ATP = (2S)-2-[5-amino-1-(5-phospho-beta-D-ribosyl)imidazole-4-carboxamido]succinate + ADP + phosphate + 2 H(+). The protein operates within purine metabolism; IMP biosynthesis via de novo pathway; 5-amino-1-(5-phospho-D-ribosyl)imidazole-4-carboxamide from 5-amino-1-(5-phospho-D-ribosyl)imidazole-4-carboxylate: step 1/2. This is Phosphoribosylaminoimidazole-succinocarboxamide synthase from Persephonella marina (strain DSM 14350 / EX-H1).